Consider the following 617-residue polypeptide: Pentatricopeptide repeat-containing protein At4g18520, chloroplastic (617 aa).

A chloroplast-targeting transit peptide spans 1 to 19; that stretch reads MFSLSLIQPRLRISEIPVT. 14 PPR repeats span residues 116–146, 147–181, 183–217, 222–247, 248–282, 283–317, 318–348, 349–383, 384–418, 419–449, 450–484, 485–519, 520–550, and 551–585; these read VIYF…MPEK, NTVT…GIRF, NERM…GVGN, SSLV…MEEK, DVIS…WFLP, NEFT…MIKT, DVFV…MSNR, NTVT…HLIA, NNLT…SIEK, NVYI…LPSR, DVVS…GVEP, NPFT…HALS, NVFV…MPEK, and NLVS…GFEV.

Belongs to the PPR family. PCMP-A subfamily. As to quaternary structure, interacts with MORF8/RIP1, MORF2/RIP2 and MORF9/RIP9. As to expression, expressed specifically in aerial greening tissues, such as cotyledons, rosette leaves, cauline leaves, stems, sepals, stamens, carpels and siliques.

The protein resides in the plastid. It is found in the chloroplast. Functionally, required for proper chloroplast development. Involved in the regulation of plastid gene expression probably through regulation of plastid-encoded polymerase (PEP) dependent chloroplast transcription. Required for RNA editing of several chloroplastic transcripts, especially accD transcripts. Required for processing of the chloroplastic rpoA pre-mRNA. Required for the monocistronic rpoA transcript processing from the rpl23-rpl2-rps19-rpl22-rps3-rpl16-rpl14-rps8-rpl36-rps11-rpoA polycistron. Binds the intergenic sequence of rps11-rpoA for rpoA monocistronic RNA cleavage. This is Pentatricopeptide repeat-containing protein At4g18520, chloroplastic (PCMP-A2) from Arabidopsis thaliana (Mouse-ear cress).